Here is a 275-residue protein sequence, read N- to C-terminus: Membrane protein insertase YidC 1 (275 aa).

Positions 1 to 25 (MRKVLRVKKNIKIARIVPLVLLLVA) are cleaved as a signal peptide. The N-palmitoyl cysteine moiety is linked to residue Cys26. Cys26 carries S-diacylglycerol cysteine lipidation. The next 5 membrane-spanning stretches (helical) occupy residues 58-78 (SIGV…MPLF), 129-149 (YASL…FQAL), 171-191 (LYLL…LTNL), 198-216 (VMMT…FMGF), and 222-240 (VVLY…LLLL).

The protein belongs to the OXA1/ALB3/YidC family. Type 2 subfamily.

It is found in the cell membrane. Required for the insertion and/or proper folding and/or complex formation of integral membrane proteins into the membrane. Involved in integration of membrane proteins that insert both dependently and independently of the Sec translocase complex, as well as at least some lipoproteins. This is Membrane protein insertase YidC 1 from Streptococcus pyogenes serotype M6 (strain ATCC BAA-946 / MGAS10394).